Consider the following 309-residue polypeptide: Porphobilinogen deaminase (309 aa).

C241 carries the post-translational modification S-(dipyrrolylmethanemethyl)cysteine.

This sequence belongs to the HMBS family. As to quaternary structure, monomer. Dipyrromethane serves as cofactor.

The enzyme catalyses 4 porphobilinogen + H2O = hydroxymethylbilane + 4 NH4(+). The protein operates within porphyrin-containing compound metabolism; protoporphyrin-IX biosynthesis; coproporphyrinogen-III from 5-aminolevulinate: step 2/4. Its function is as follows. Tetrapolymerization of the monopyrrole PBG into the hydroxymethylbilane pre-uroporphyrinogen in several discrete steps. The chain is Porphobilinogen deaminase from Desulforamulus reducens (strain ATCC BAA-1160 / DSM 100696 / MI-1) (Desulfotomaculum reducens).